Here is a 652-residue protein sequence, read N- to C-terminus: Acetolactate synthase 3, chloroplastic (652 aa).

Over residues 1 to 20 the composition is skewed to polar residues; the sequence is MAAATSSSPISLTAKPSSKS. Residues 1–23 are disordered; it reads MAAATSSSPISLTAKPSSKSPLP. Residues 1 to 69 constitute a chloroplast transit peptide; the sequence is MAAATSSSPI…PEKTDKIKTF (69 aa). E126 contributes to the thiamine diphosphate binding site. FAD-binding positions include R228, 334–355, and 377–396; these read HGTV…FGVR and DIDS…VCGD. Positions 469–549 are thiamine pyrophosphate binding; the sequence is QHQMWAAQFY…VKILLLNNQH (81 aa). D520 and N547 together coordinate Mg(2+).

It belongs to the TPP enzyme family. It depends on Mg(2+) as a cofactor. The cofactor is thiamine diphosphate.

The protein resides in the plastid. Its subcellular location is the chloroplast. The catalysed reaction is 2 pyruvate + H(+) = (2S)-2-acetolactate + CO2. Its pathway is amino-acid biosynthesis; L-isoleucine biosynthesis; L-isoleucine from 2-oxobutanoate: step 1/4. It functions in the pathway amino-acid biosynthesis; L-valine biosynthesis; L-valine from pyruvate: step 1/4. The sequence is that of Acetolactate synthase 3, chloroplastic from Brassica napus (Rape).